The following is a 399-amino-acid chain: Phosphatidate cytidylyltransferase 5, chloroplastic (399 aa).

Residues 1-26 (MAPFVEVCRYKPLPLSLSSLCTCPCR) constitute a chloroplast transit peptide. A run of 6 helical transmembrane segments spans residues 123–143 (VGGI…AAVL), 187–207 (FGHI…ALLL), 217–237 (LSST…WVKL), 266–286 (VGLV…TFAF), 309–329 (AFAG…SLSW), and 333–353 (LVST…GDLT).

The protein belongs to the CDS family. Requires Mg(2+) as cofactor.

Its subcellular location is the plastid. The protein resides in the chloroplast membrane. The catalysed reaction is a 1,2-diacyl-sn-glycero-3-phosphate + CTP + H(+) = a CDP-1,2-diacyl-sn-glycerol + diphosphate. Its pathway is phospholipid metabolism; CDP-diacylglycerol biosynthesis; CDP-diacylglycerol from sn-glycerol 3-phosphate: step 3/3. With respect to regulation, highest activities is obtained at about 30 mM CTP and 2 mM phosphatidic acid (PA). In terms of biological role, may be involved in the synthesis of minor phospholipids and in modulation of IP3-mediated signal transduction. Promotes the biosynthesis of plastidial phosphatidylglycerol (PG) which is required for structure and function of thylakoid membranes and, hence, for photoautotrophic growth. The chain is Phosphatidate cytidylyltransferase 5, chloroplastic from Arabidopsis thaliana (Mouse-ear cress).